Consider the following 961-residue polypeptide: DNA replication licensing factor MCM2 (961 aa).

Over residues 1 to 17 (MDDSENNAPSTPGSPGF) the composition is skewed to polar residues. Disordered regions lie at residues 1–81 (MDDS…FNDN) and 120–220 (AEAE…EEDE). The segment covering 39–78 (SDDDDDDVVGAEEAEVDPNVLPEDDGVVAAEEEEDGEDLF) has biased composition (acidic residues). Composition is skewed to basic and acidic residues over residues 120-146 (AEAE…LHDQ) and 166-176 (PPREPRTPRSD). The span at 205 to 220 (QTDDDPYEDEFDEEDE) shows a compositional bias: acidic residues. The C4-type zinc-finger motif lies at 380–406 (CSKCGTVLGPFFQNSYTEVKVGSCPEC). In terms of domain architecture, MCM spans 524–730 (IGERIVKSIA…FTDEMLARFV (207 aa)). 574-581 (GDPGTAKS) serves as a coordination point for ATP. The Arginine finger motif lies at 706–709 (SRFD).

The protein belongs to the MCM family. Component of the minichromosome maintenance (MCM) complex, a heterotetramer composed of MCM2, MCM3, MCM4, MCM5, MCM6 and MCM7. Interacts with CSN5. As to expression, widely expressed, with higher expression in developing tissues.

Its subcellular location is the nucleus. The catalysed reaction is ATP + H2O = ADP + phosphate + H(+). Functionally, probable component of the MCM2-7 complex (MCM complex) that may function as a DNA helicase and which is essential to undergo a single round of replication initiation and elongation per cell cycle in eukaryotic cells. Can complement the fission yeast mcm2 mutant. This Oryza sativa subsp. japonica (Rice) protein is DNA replication licensing factor MCM2.